We begin with the raw amino-acid sequence, 599 residues long: NADH-ubiquinone oxidoreductase chain 5 (599 aa).

16 helical membrane-spanning segments follow: residues 1–21 (MLEL…IFLF), 28–48 (FAES…ILLM), 81–101 (CFFV…FYYM), 115–135 (GLFL…QLLI), 171–191 (GDIG…DWSF), 193–213 (GLYA…LAAA), 233–253 (TPVS…FLLI), 265–285 (IQLM…ICAL), 302–322 (LGLM…FLHI), 323–343 (CMHA…IHGL), 363–383 (SVCF…AGFF), 398–420 (NSWA…VRLL), 455–475 (VIAG…CLSL), 481–501 (LAAV…VNLL), 510–530 (IPEL…HKLI), and 577–597 (LIKM…GIMI).

The protein belongs to the complex I subunit 5 family.

The protein localises to the mitochondrion inner membrane. It catalyses the reaction a ubiquinone + NADH + 5 H(+)(in) = a ubiquinol + NAD(+) + 4 H(+)(out). Its function is as follows. Core subunit of the mitochondrial membrane respiratory chain NADH dehydrogenase (Complex I) that is believed to belong to the minimal assembly required for catalysis. Complex I functions in the transfer of electrons from NADH to the respiratory chain. The immediate electron acceptor for the enzyme is believed to be ubiquinone. This Branchiostoma floridae (Florida lancelet) protein is NADH-ubiquinone oxidoreductase chain 5 (ND5).